A 339-amino-acid chain; its full sequence is Protein-glutamate methylesterase/protein-glutamine glutaminase 3 (339 aa).

The Response regulatory domain occupies 2–119 (NIGIVNDLPL…GLSTDASPQA (118 aa)). D53 is subject to 4-aspartylphosphate. In terms of domain architecture, CheB-type methylesterase spans 141–336 (PGPAPTRGQP…PQLIARIALT (196 aa)). Active-site residues include S158, H185, and D278.

It belongs to the CheB family. Phosphorylated by CheA. Phosphorylation of the N-terminal regulatory domain activates the methylesterase activity.

It is found in the cytoplasm. It carries out the reaction [protein]-L-glutamate 5-O-methyl ester + H2O = L-glutamyl-[protein] + methanol + H(+). The catalysed reaction is L-glutaminyl-[protein] + H2O = L-glutamyl-[protein] + NH4(+). In terms of biological role, involved in chemotaxis. Part of a chemotaxis signal transduction system that modulates chemotaxis in response to various stimuli. Catalyzes the demethylation of specific methylglutamate residues introduced into the chemoreceptors (methyl-accepting chemotaxis proteins or MCP) by CheR. Also mediates the irreversible deamidation of specific glutamine residues to glutamic acid. This Burkholderia orbicola (strain AU 1054) protein is Protein-glutamate methylesterase/protein-glutamine glutaminase 3.